A 329-amino-acid polypeptide reads, in one-letter code: Protein mlo2 (329 aa).

The segment at 33–104 (DTCTYSMGYL…HSIPCNLRKS (72 aa)) adopts a UBR-type zinc-finger fold. The PHD-type zinc-finger motif lies at 120-179 (GRFCICDTVYNPETEEGTMFQCILCEDWFHEKCLQKTNKGIAIPDAETFEWLVCSECSEK).

Belongs to the UBR7 family.

Functionally, not known, interfere with mitotic chromosome segregation when overexpressed. This chain is Protein mlo2 (mlo2), found in Schizosaccharomyces pombe (strain 972 / ATCC 24843) (Fission yeast).